The sequence spans 244 residues: Phosphoadenosine 5'-phosphosulfate reductase (244 aa).

C239 serves as the catalytic Nucleophile; cysteine thiosulfonate intermediate.

It belongs to the PAPS reductase family. CysH subfamily.

Its subcellular location is the cytoplasm. The catalysed reaction is [thioredoxin]-disulfide + sulfite + adenosine 3',5'-bisphosphate + 2 H(+) = [thioredoxin]-dithiol + 3'-phosphoadenylyl sulfate. Its pathway is sulfur metabolism; hydrogen sulfide biosynthesis; sulfite from sulfate: step 3/3. Functionally, catalyzes the formation of sulfite from phosphoadenosine 5'-phosphosulfate (PAPS) using thioredoxin as an electron donor. The sequence is that of Phosphoadenosine 5'-phosphosulfate reductase from Buchnera aphidicola subsp. Acyrthosiphon pisum (strain Tuc7).